Consider the following 452-residue polypeptide: Exodeoxyribonuclease 7 large subunit (452 aa).

It belongs to the XseA family. As to quaternary structure, heterooligomer composed of large and small subunits.

It localises to the cytoplasm. The catalysed reaction is Exonucleolytic cleavage in either 5'- to 3'- or 3'- to 5'-direction to yield nucleoside 5'-phosphates.. Its function is as follows. Bidirectionally degrades single-stranded DNA into large acid-insoluble oligonucleotides, which are then degraded further into small acid-soluble oligonucleotides. This chain is Exodeoxyribonuclease 7 large subunit, found in Bacillus anthracis (strain A0248).